The chain runs to 166 residues: NAD(P)H-quinone oxidoreductase subunit I, chloroplastic (166 aa).

4Fe-4S ferredoxin-type domains follow at residues 55 to 84 (GRIH…VDWK) and 95 to 124 (LNYS…MTEE). Residues Cys64, Cys67, Cys70, Cys74, Cys104, Cys107, Cys110, and Cys114 each coordinate [4Fe-4S] cluster.

Belongs to the complex I 23 kDa subunit family. As to quaternary structure, NDH is composed of at least 16 different subunits, 5 of which are encoded in the nucleus. [4Fe-4S] cluster serves as cofactor.

Its subcellular location is the plastid. It localises to the chloroplast thylakoid membrane. The enzyme catalyses a plastoquinone + NADH + (n+1) H(+)(in) = a plastoquinol + NAD(+) + n H(+)(out). The catalysed reaction is a plastoquinone + NADPH + (n+1) H(+)(in) = a plastoquinol + NADP(+) + n H(+)(out). Functionally, NDH shuttles electrons from NAD(P)H:plastoquinone, via FMN and iron-sulfur (Fe-S) centers, to quinones in the photosynthetic chain and possibly in a chloroplast respiratory chain. The immediate electron acceptor for the enzyme in this species is believed to be plastoquinone. Couples the redox reaction to proton translocation, and thus conserves the redox energy in a proton gradient. The sequence is that of NAD(P)H-quinone oxidoreductase subunit I, chloroplastic from Sigesbeckia blakei.